The sequence spans 465 residues: ATP-dependent protease ATPase subunit HslU (465 aa).

Residues V20, 62–67, D277, E343, and R415 contribute to the ATP site; that span reads GVGKTE.

Belongs to the ClpX chaperone family. HslU subfamily. In terms of assembly, a double ring-shaped homohexamer of HslV is capped on each side by a ring-shaped HslU homohexamer. The assembly of the HslU/HslV complex is dependent on binding of ATP.

The protein resides in the cytoplasm. Functionally, ATPase subunit of a proteasome-like degradation complex; this subunit has chaperone activity. The binding of ATP and its subsequent hydrolysis by HslU are essential for unfolding of protein substrates subsequently hydrolyzed by HslV. HslU recognizes the N-terminal part of its protein substrates and unfolds these before they are guided to HslV for hydrolysis. This Geobacillus kaustophilus (strain HTA426) protein is ATP-dependent protease ATPase subunit HslU.